The sequence spans 306 residues: ATP synthase gamma chain (306 aa).

The protein belongs to the ATPase gamma chain family. In terms of assembly, F-type ATPases have 2 components, CF(1) - the catalytic core - and CF(0) - the membrane proton channel. CF(1) has five subunits: alpha(3), beta(3), gamma(1), delta(1), epsilon(1). CF(0) has three main subunits: a, b and c.

Its subcellular location is the cell membrane. In terms of biological role, produces ATP from ADP in the presence of a proton gradient across the membrane. The gamma chain is believed to be important in regulating ATPase activity and the flow of protons through the CF(0) complex. In Bifidobacterium animalis subsp. lactis (strain AD011), this protein is ATP synthase gamma chain.